The primary structure comprises 295 residues: Cytidine deaminase (295 aa).

CMP/dCMP-type deaminase domains follow at residues 48–168 (ADDE…FGPA) and 187–295 (EETT…YLAI). Residue 89–91 (NLE) coordinates substrate. His102 contacts Zn(2+). Glu104 (proton donor) is an active-site residue. 2 residues coordinate Zn(2+): Cys129 and Cys132.

Belongs to the cytidine and deoxycytidylate deaminase family. Homodimer. Zn(2+) is required as a cofactor.

The catalysed reaction is cytidine + H2O + H(+) = uridine + NH4(+). It carries out the reaction 2'-deoxycytidine + H2O + H(+) = 2'-deoxyuridine + NH4(+). This enzyme scavenges exogenous and endogenous cytidine and 2'-deoxycytidine for UMP synthesis. This chain is Cytidine deaminase, found in Vibrio atlanticus (strain LGP32) (Vibrio splendidus (strain Mel32)).